The following is a 130-amino-acid chain: Large ribosomal subunit protein uL14 (130 aa).

This sequence belongs to the universal ribosomal protein uL14 family. In terms of assembly, part of the 50S ribosomal subunit. Forms a cluster with proteins L3 and L19. In the 70S ribosome, L14 and L19 interact and together make contacts with the 16S rRNA in bridges B5 and B8.

Binds to 23S rRNA. Forms part of two intersubunit bridges in the 70S ribosome. This is Large ribosomal subunit protein uL14 from Leptospira interrogans serogroup Icterohaemorrhagiae serovar copenhageni (strain Fiocruz L1-130).